We begin with the raw amino-acid sequence, 382 residues long: Per os infectivity factor 2 (382 aa).

As to quaternary structure, forms the PIF complex together with PIF1 and PIF3. The complex also interacts with per os infectivity factor PIF0.

Functionally, per os infectivity factor that mediates the specific binding of occluded virions (ODV) to the host midgut target cells. This is Per os infectivity factor 2 from Autographa californica nuclear polyhedrosis virus (AcMNPV).